The chain runs to 309 residues: Mitochondrial succinate-fumarate transporter 1 (309 aa).

3 Solcar repeats span residues 11-96 (IPPY…FQTA), 108-196 (RGRF…FDIL), and 208-298 (LQPW…VTGL). Transmembrane regions (helical) follow at residues 17-37 (AVSG…IDVI), 65-85 (VRAL…KYTL), 111-131 (FLSG…PFEV), 171-191 (GAAP…TAKN), 214-234 (MISG…FDVV), and 273-293 (GLLP…AVAD).

This sequence belongs to the mitochondrial carrier (TC 2.A.29) family. As to expression, expressed in root tips, cotyledons, hypocotyls, leaves, trichomes, stems, flowers, carpels, anthers, pollen and abscission zone of siliques.

The protein localises to the mitochondrion inner membrane. Its function is as follows. May transport cytoplasmic succinate, derived from fatty acid oxidation, into the mitochondrial matrix in exchange of fumarate during lipid mobilization in seed germination. Conversion of seed-reserved triacylglycerols into sucrose is necessary for growth before the onset of photosynthesis and involves fatty acid beta-oxidation, the glyoxylate cycle and gluconeogenesis. The sequence is that of Mitochondrial succinate-fumarate transporter 1 (SFC1) from Arabidopsis thaliana (Mouse-ear cress).